The sequence spans 576 residues: uncharacterized protein (576 aa).

The disordered stretch occupies residues 41–78 (EKESESKLNSKSTTLQSSDSEDWDSEENEDDITDVGVP). Over residues 49-58 (NSKSTTLQSS) the composition is skewed to low complexity. The span at 59-73 (DSEDWDSEENEDDIT) shows a compositional bias: acidic residues. WD repeat units follow at residues 87 to 126 (GHSK…ATNP), 195 to 235 (GHIA…SQLE), 248 to 288 (LSRI…KRPV), 296 to 335 (LPQQ…KCVN), and 393 to 433 (TVTA…RGVK). Residues 547-576 (SETQPTPIYQGVTEGDISSEEGNPSKKQKR) are disordered.

This is an uncharacterized protein from Schizosaccharomyces pombe (strain 972 / ATCC 24843) (Fission yeast).